We begin with the raw amino-acid sequence, 1104 residues long: Inhibitory regulator protein BUD2/CLA2 (1104 aa).

Ser2 carries the N-acetylserine modification. The C2 domain occupies 316–444; the sequence is RSEYLSITGS…RYNKETRLPI (129 aa). The region spanning 536–753 is the Ras-GAP domain; it reads AKIDGTVSRI…NDLLDYIDKM (218 aa). Ser854 carries the phosphoserine modification. Residues 1027–1104 are disordered; sequence NPKSSNKTSV…FKKKKETGGS (78 aa). Polar residues-rich tracts occupy residues 1029 to 1043 and 1052 to 1069; these read KSSNKTSVHGTSSEN and LPNSQGKGNLGNRFSPTK. Basic residues predominate over residues 1090 to 1104; the sequence is KLTRWFKKKKETGGS.

In terms of biological role, stimulates the GTPase activity of BUD1/RSR1. Participates in the regulation of bud-site selection. This chain is Inhibitory regulator protein BUD2/CLA2 (BUD2), found in Saccharomyces cerevisiae (strain ATCC 204508 / S288c) (Baker's yeast).